A 551-amino-acid polypeptide reads, in one-letter code: MPAKQVAFAEHAREKMLRGVNVLADAVKVTLGPKGRNVVLDKSFGAPTITKDGVSVAKEIELADKFENMGAQMVKEVASQASDEAGDGTTTATVLAQAIIREGLKAVIAGMNPMDLKRGIDKSVIVVVEELKKQSKPCKTQKEVAQVGTISANSDDSIGKIIAEAMEKVGNEGVITVEEGSGLANELDVVEGMQFDRGYLSPYFVNNQDKMVAELENPYILLHDKKISSIRDMLPILEQVAKSSRPLLIVAEDVEGEALATLVVNTMRGIIKVAAVKAPGFGDRRKAMLEDMAILTGGRVVSEEIGMKLESTTLADLGQAKKIVIDKENTTMIDGAGQQSEIKARVEQIRRQMEDASSDYDREKLQERVAKLAGGVAVIKVGAGSEMEMKEKKARVEDALHATRAAVEEGIVPGGGVALVRARHALEGFKTANHDQDMGVAIIRRAIEEPLRQIVANAGGEGSVVLNKVVDGKDGYGYNAATDEYGDMFEMGVIDPTKVTRTALQKASSIAGLMITTEAMVTELPKKDDKSGGDMGDMGGGMGGMGGMGGF.

ATP contacts are provided by residues 30-33 (TLGP), K51, 87-91 (DGTTT), G415, 479-481 (NAA), and D495.

Belongs to the chaperonin (HSP60) family. As to quaternary structure, forms a cylinder of 14 subunits composed of two heptameric rings stacked back-to-back. Interacts with the co-chaperonin GroES.

It localises to the cytoplasm. It catalyses the reaction ATP + H2O + a folded polypeptide = ADP + phosphate + an unfolded polypeptide.. Functionally, together with its co-chaperonin GroES, plays an essential role in assisting protein folding. The GroEL-GroES system forms a nano-cage that allows encapsulation of the non-native substrate proteins and provides a physical environment optimized to promote and accelerate protein folding. The chain is Chaperonin GroEL from Acidithiobacillus ferrooxidans (strain ATCC 23270 / DSM 14882 / CIP 104768 / NCIMB 8455) (Ferrobacillus ferrooxidans (strain ATCC 23270)).